The sequence spans 408 residues: Tripartite motif containing 13 (408 aa).

The segment at 10-58 adopts an RING-type zinc-finger fold; it reads CPICCSLFDDPRVLPCSHNFCKKCLDGVLEENSRTMQWRPSSFKCPTCR. The B box-type zinc-finger motif lies at 89–131; that stretch reads PKMPVCKEHSDQPLNIFCSTDLKLICGSCATTGEHKKHVFSSI. Residues cysteine 94, histidine 97, cysteine 117, and histidine 123 each contribute to the Zn(2+) site. Residues 322–342 traverse the membrane as a helical segment; that stretch reads ILVVACLILLLVTFLCAYPFI.

It is found in the endoplasmic reticulum membrane. The protein operates within protein modification; protein ubiquitination. In terms of biological role, E3 ubiquitin ligase involved in the retrotranslocation and turnover of membrane and secretory proteins from the ER through a set of processes named ER-associated degradation (ERAD). This process acts on misfolded proteins as well as in the regulated degradation of correctly folded proteins. This chain is Tripartite motif containing 13 (trim13), found in Xenopus tropicalis (Western clawed frog).